Consider the following 712-residue polypeptide: MTSPVAQCASVPDSGLLCLVMLARYHGLAADPEQLRHEFAEQAFCSETIQLAARRVGLKVRRHRPAPARLPRAPLPAIALDRQGGYFVLARFEPGADQAVLIQRPGQAPARLGQAEFEALWAGELLLCACAASPTQALARFDFSWFIPALVKHRHLIGEVLLISLVLQFISLLTPLFFQVVMDKVLVNNAMETLNVIAVGFLAAILFEALLTGIRTYLFAHTSSKLDVELGARLYAHLLRLPLAYFQARRVGDSVARVRELEHIRAFLTGNAVTVLLDVVFSVVFIAVMFFYSVKLTLVVLAALPCYFLLSLVLTPVLRRRLDVKFNRGAENQAFLVETVSGIDTVKSLAVEPQWQRNWDRQLAGYVAAGLSVANVAMLANTGVTLISRLVALGVLWVGATEVVAQRMTVGELVAFNMLSGHVTQPVIRLAQLWNDFQQTGVSMQRLGDILNCRTEVAGDKAQLPALRGSIELDRVSFRYRPDAADALRNVSLRIAPGEVVGVVGRSGSGKSTLTRLIQRMFVADRGRVLIDGHDIGIVDSASLRRQLGVVLQESTLFNRSVRDNIALTRPGASMHEVVAAARLAGAHEFICQLPEGYDTMLGENGVGLSGGQRQRIGIARALIHRPRVLILDEATSALDYESEHIIQRNMRDICDGRTVIIIAHRLSAVRCADRIVVMEGGEVAECGSHETLLAAGGLYARLQALQAGEAG.

Residues 7–128 (QCASVPDSGL…ALWAGELLLC (122 aa)) enclose the Peptidase C39 domain. An ABC transmembrane type-1 domain is found at 157 to 439 (IGEVLLISLV…LAQLWNDFQQ (283 aa)). Helical transmembrane passes span 160 to 180 (VLLISLVLQFISLLTPLFFQV), 194 to 214 (LNVIAVGFLAAILFEALLTGI), 272 to 292 (AVTVLLDVVFSVVFIAVMFFY), 298 to 318 (LVVLAALPCYFLLSLVLTPVL), 367 to 387 (VAAGLSVANVAMLANTGVTLI), and 390 to 410 (LVALGVLWVGATEVVAQRMTV). One can recognise an ABC transporter domain in the interval 471–706 (IELDRVSFRY…GGLYARLQAL (236 aa)). 505–512 (GRSGSGKS) serves as a coordination point for ATP.

The protein belongs to the ABC transporter superfamily. Cyclolysin exporter (TC 3.A.1.109.2) family.

It is found in the cell membrane. Involved in the export of calmodulin-sensitive adenylate cyclase-hemolysin (cyclolysin). In Bordetella pertussis (strain ATCC 9797 / DSM 5571 / CCUG 30873 / LMG 14455 / NCTC 10739 / 18323), this protein is Cyclolysin secretion/processing ATP-binding protein CyaB (cyaB).